The sequence spans 228 residues: Octanoyltransferase (228 aa).

Residues 40 to 225 (GEEAERVWLV…SFERVFDAAP (186 aa)) form the BPL/LPL catalytic domain. Substrate contacts are provided by residues 79–86 (RGGQWTYH), 156–158 (AIG), and 169–171 (GIA). Catalysis depends on Cys187, which acts as the Acyl-thioester intermediate.

The protein belongs to the LipB family.

The protein localises to the cytoplasm. The catalysed reaction is octanoyl-[ACP] + L-lysyl-[protein] = N(6)-octanoyl-L-lysyl-[protein] + holo-[ACP] + H(+). The protein operates within protein modification; protein lipoylation via endogenous pathway; protein N(6)-(lipoyl)lysine from octanoyl-[acyl-carrier-protein]: step 1/2. Catalyzes the transfer of endogenously produced octanoic acid from octanoyl-acyl-carrier-protein onto the lipoyl domains of lipoate-dependent enzymes. Lipoyl-ACP can also act as a substrate although octanoyl-ACP is likely to be the physiological substrate. This is Octanoyltransferase from Acidiphilium cryptum (strain JF-5).